The chain runs to 142 residues: Type 3 secretion system pilotin (142 aa).

Residues 1-23 (MIRHGSNKLKIFILSILLLTLSG) form the signal peptide. The N-palmitoyl cysteine moiety is linked to residue C24. C24 carries S-diacylglycerol cysteine lipidation.

It belongs to the MxiM family. Monomer. Interacts with the secretin MxiD/SctC.

Its subcellular location is the cell outer membrane. In terms of biological role, involved in the synthesis of the type III secretion system (T3SS), also called injectisome, which is used to inject bacterial effector proteins into eukaryotic host cells. Pilot protein that is required for the proper localization of the secretin MxiD/SctC in the outer membrane. Also influences both MxiD/SctC multimerization and stability. Required for both Ipa translocation and tissue culture cell invasion. Binds lipids. The sequence is that of Type 3 secretion system pilotin from Shigella flexneri.